We begin with the raw amino-acid sequence, 299 residues long: tRNA dimethylallyltransferase (299 aa).

13–20 (GPTASGKT) lines the ATP pocket. 15 to 20 (TASGKT) is a substrate binding site. Residues 38–41 (DSRQ) are interaction with substrate tRNA.

It belongs to the IPP transferase family. As to quaternary structure, monomer. Mg(2+) is required as a cofactor.

The enzyme catalyses adenosine(37) in tRNA + dimethylallyl diphosphate = N(6)-dimethylallyladenosine(37) in tRNA + diphosphate. Its function is as follows. Catalyzes the transfer of a dimethylallyl group onto the adenine at position 37 in tRNAs that read codons beginning with uridine, leading to the formation of N6-(dimethylallyl)adenosine (i(6)A). The sequence is that of tRNA dimethylallyltransferase from Prochlorococcus marinus (strain SARG / CCMP1375 / SS120).